A 396-amino-acid chain; its full sequence is S-adenosylmethionine synthase 4 (396 aa).

Glutamate 13 contributes to the Mg(2+) binding site. Histidine 19 is an ATP binding site. Glutamate 47 is a binding site for K(+). Residues glutamate 60 and glutamine 103 each coordinate L-methionine. ATP contacts are provided by residues 171–173 (DGK), 239–242 (SGRF), aspartate 250, 256–257 (RK), alanine 273, lysine 277, and lysine 281. Residue aspartate 250 coordinates L-methionine. Lysine 281 is a binding site for L-methionine.

Belongs to the AdoMet synthase family. Homotetramer. It depends on Mn(2+) as a cofactor. Requires Mg(2+) as cofactor. Co(2+) is required as a cofactor. The cofactor is K(+). As to expression, expressed in roots, stems and leaves (at protein level).

The protein resides in the cytoplasm. It catalyses the reaction L-methionine + ATP + H2O = S-adenosyl-L-methionine + phosphate + diphosphate. The protein operates within amino-acid biosynthesis; S-adenosyl-L-methionine biosynthesis; S-adenosyl-L-methionine from L-methionine: step 1/1. Its function is as follows. Catalyzes the formation of S-adenosylmethionine from methionine and ATP. The reaction comprises two steps that are both catalyzed by the same enzyme: formation of S-adenosylmethionine (AdoMet) and triphosphate, and subsequent hydrolysis of the triphosphate. May be involved in the synthesis of betain in response to abiotic stress such as high salinity. This is S-adenosylmethionine synthase 4 (SAMS4) from Atriplex nummularia (Old man saltbush).